A 481-amino-acid polypeptide reads, in one-letter code: MEKRTSCSVQTSTNCDNSLEILNSAHQATGAVQMRIKNANSHQDRQSQTKSMILTDAGKVTEPISRHRRNHSQHVLKDVIPPLEHPMVEKEGYLQKAKIADGGKKLRKNWSTSWIVLSGRKIEFYKDSKQQALPNMKTRHNVESVDLCGAHIEWAKEKSSRKSVFQITTVSGNEFLLQSDIDFLILDWFQAIKNAIDRLPKNPSCGSLELFNLQRSSSSELPSHCHIDRKEQKPEHRKSFMFRLHHSASDTSDKNRVKSRLKKFISRRPSLKTLQEKGLIKDQIFGSHLHTVCEREHSTVPWFVKQCIEAVEKRGLDVDGIYRVSGNLATIQKLRFIVNQEEKLNLDDSQWEDIHVVTGALKMFFRELSEPLFPYSFFERFVEAIKKQDSNEKIETMRSLVKRLPPPNHDTMKILFRHLTKIVAKASQNLMSTQSLGIVFGPTLLRAENESGNVAVHMVYQNQIAEFMLTEYDKIFSSEED.

5 positions are modified to phosphoserine: serine 51, serine 111, serine 204, serine 207, and serine 249. Residues 87–197 (MVEKEGYLQK…WFQAIKNAID (111 aa)) enclose the PH domain. The 190-residue stretch at 287–476 (SHLHTVCERE…FMLTEYDKIF (190 aa)) folds into the Rho-GAP domain.

The protein localises to the cytoplasm. It localises to the membrane. Its function is as follows. GTPase activator for the Rho-type GTPases by converting them to an inactive GDP-bound state. Has activity toward RAC1. Overexpression results in an increase in actin stress fibers and cell contraction. This is Rho GTPase-activating protein 15 (Arhgap15) from Mus musculus (Mouse).